A 1193-amino-acid chain; its full sequence is Falcilysin (1193 aa).

His-129 provides a ligand contact to Zn(2+). The Proton acceptor role is filled by Glu-132. 2 residues coordinate Zn(2+): His-133 and Glu-243. Residues 376-404 are disordered; that stretch reads DKTNNHNNNHSNNQSSENNGYSNGSHSSD. Positions 380 to 394 are enriched in low complexity; that stretch reads NHNNNHSNNQSSENN. Residues 395 to 404 show a composition bias toward polar residues; that stretch reads GYSNGSHSSD. Residues 583-619 are a coiled coil; sequence LLEGDENYAQEQENLEKQELKKRIENFNEQEKEQVIK.

This sequence belongs to the peptidase M16 family. Monomer. Component of the hemozoin formation complex (HFC) composed of falcipains FP2A and/or FP2B, plasmepsins PMII, PMIII/HAP and PMIV, heme detoxifying protein HDP and falcilysin FLN. The HFC complex is involved in hemoglobin degradation and detoxification of heme in the food vacuole during the asexual blood stage. The cofactor is Zn(2+). In terms of processing, does not require processing for targeting to the food vacuole or maturation.

Its subcellular location is the vacuole membrane. The protein localises to the plastid. It is found in the apicoplast. It localises to the vesicle. Its function is as follows. In the food vacuole, acts downstream of proteases plasmepsins PMI and PMII and falcipains during the catabolism of host hemoglobin by cleaving peptide fragments of alpha and beta hemoglobin subunits generated by PMI and PMII and falcipains. In the apicoplast, degrades apicoplast transit peptides after their cleavage. Prefers bulky hydrophobic amino acids in the P1' position at both acidic and neutral pH. At P2', prefers hydrophobic residues at acidic pH; at neutral pH, these same residues are abundant but prefers Arg. At P3', prefers hydrophobic residues, especially Met, at both pH conditions. At P4' and P5', prefers acidic residues at acidic pH, however, at neutral pH, the enzyme is less selective at these positions. The optimal site cleavage at acidic pH is YNEHS-|-FFMEE and, at neutral pH, MKRHS-|-FRMRG. The polypeptide is Falcilysin (Plasmodium falciparum (isolate 3D7)).